The chain runs to 126 residues: Aspartate 1-decarboxylase (126 aa).

Residue serine 25 is the Schiff-base intermediate with substrate; via pyruvic acid of the active site. Serine 25 bears the Pyruvic acid (Ser) mark. Threonine 57 is a binding site for substrate. Residue tyrosine 58 is the Proton donor of the active site. 72–74 provides a ligand contact to substrate; the sequence is GAA.

It belongs to the PanD family. In terms of assembly, heterooctamer of four alpha and four beta subunits. Requires pyruvate as cofactor. Post-translationally, is synthesized initially as an inactive proenzyme, which is activated by self-cleavage at a specific serine bond to produce a beta-subunit with a hydroxyl group at its C-terminus and an alpha-subunit with a pyruvoyl group at its N-terminus.

It localises to the cytoplasm. It catalyses the reaction L-aspartate + H(+) = beta-alanine + CO2. It participates in cofactor biosynthesis; (R)-pantothenate biosynthesis; beta-alanine from L-aspartate: step 1/1. Its function is as follows. Catalyzes the pyruvoyl-dependent decarboxylation of aspartate to produce beta-alanine. The protein is Aspartate 1-decarboxylase of Campylobacter jejuni subsp. jejuni serotype O:6 (strain 81116 / NCTC 11828).